Consider the following 260-residue polypeptide: tRNA pseudouridine synthase A (260 aa).

Asp60 functions as the Nucleophile in the catalytic mechanism. Tyr118 is a substrate binding site.

The protein belongs to the tRNA pseudouridine synthase TruA family. In terms of assembly, homodimer.

It catalyses the reaction uridine(38/39/40) in tRNA = pseudouridine(38/39/40) in tRNA. Formation of pseudouridine at positions 38, 39 and 40 in the anticodon stem and loop of transfer RNAs. The polypeptide is tRNA pseudouridine synthase A (Leuconostoc citreum (strain KM20)).